The chain runs to 1177 residues: Zinc finger CCCH domain-containing protein 6 (1177 aa).

A compositionally biased stretch (basic and acidic residues) spans 1-12 (MTDSEHAGHDRE). Disordered regions lie at residues 1 to 137 (MTDS…SKEY) and 179 to 206 (QESSGSSFSKESGKKLRSKGSPPGTEYR). Positions 13–31 (DGELEDGEIDDAGFEETQD) are enriched in acidic residues. Positions 27-73 (EETQDQEAKENEKQKNEKAYRKSRKKHKKEREKKKSKRRKHEKHKHN) form a coiled coil. Over residues 32 to 46 (QEAKENEKQKNEKAY) the composition is skewed to basic and acidic residues. A compositionally biased stretch (basic residues) spans 47 to 73 (RKSRKKHKKEREKKKSKRRKHEKHKHN). Over residues 179 to 188 (QESSGSSFSK) the composition is skewed to low complexity. 3 consecutive C3H1-type zinc fingers follow at residues 271 to 297 (KGKQICKYFLEGRCIKGDHCKFNHDAE), 299 to 326 (EKKKEVCKYYLQGYCTKGENCIYMHSEF), and 327 to 350 (PCKFYHSGAKCYQGDKCKFSHDDL). Residues 347 to 383 (HDDLTKETRKLLDKVLNADEELVNEDERELEELRKRG) are a coiled coil. Disordered stretches follow at residues 383-416 (GITPLPKPPPGVGLLPTPSEHFPFSDPEDDFETD), 446-587 (PPAF…ESMQ), 622-654 (QQQPPIARDTAHLGSGPNSSSRMTSHCPLSASG), 670-767 (RYQE…KKPH), 780-826 (PKKL…SERE), 942-988 (EQSG…SSRS), 1043-1101 (DPRD…PVDG), and 1132-1162 (LLRPPYSDPRQAREPGQASPTPDEETDDKPL). The span at 493 to 502 (HPGSPGHHPC) shows a compositional bias: low complexity. 2 stretches are compositionally biased toward polar residues: residues 512–522 (ENPSLLPSSSE) and 564–587 (SSPASLYQQMPSEMQRSADSESMQ). Over residues 713-728 (RTLQKQTGTLRNQQLP) the composition is skewed to polar residues. Positions 753–767 (PRLRTVPRQDIKKPH) are enriched in basic and acidic residues. Positions 955-967 (GDPRLQKNFDPRL) are enriched in basic and acidic residues. Composition is skewed to polar residues over residues 1050-1064 (LSATELSTISSGENT) and 1077-1093 (KNQPSPGEVTVPQNTTA). S1150 bears the Phosphoserine mark.

The chain is Zinc finger CCCH domain-containing protein 6 (Zc3h6) from Mus musculus (Mouse).